The sequence spans 449 residues: Keratin, type I cytoskeletal 27 (449 aa).

The interval Met-1–Asn-73 is head. The interval Glu-74–Trp-109 is coil 1A. In terms of domain architecture, IF rod spans Glu-74–Cys-389. Residues Tyr-110 to Ile-131 form a linker 1 region. Residues Ile-132–Leu-223 form a coil 1B region. The linker 12 stretch occupies residues Gln-224 to Leu-246. The interval Leu-247–Asp-385 is coil 2. Positions Glu-386–Ser-449 are tail. The segment at Leu-425–Ser-449 is disordered. A compositionally biased stretch (basic and acidic residues) spans His-430–Ser-449.

It belongs to the intermediate filament family. In terms of assembly, heterotetramer of two type I and two type II keratins. Interacts with KRT6A to form filaments.

The protein localises to the cytoplasm. Its function is as follows. Essential for the proper assembly of type I and type II keratin protein complexes and formation of keratin intermediate filaments in the inner root sheath (irs). This chain is Keratin, type I cytoskeletal 27, found in Rattus norvegicus (Rat).